Consider the following 211-residue polypeptide: PDR1 up-regulated protein 1 (211 aa).

2 helical membrane passes run 45–67 (ISKA…PYAY) and 82–99 (RTIL…NVAA).

It belongs to the PUP1 family.

It is found in the mitochondrion membrane. Its function is as follows. Mitochondrial protein that contributes to the enhanced virulence of C.glabrata strains that acquired azole resistance. This chain is PDR1 up-regulated protein 1, found in Candida glabrata (strain ATCC 2001 / BCRC 20586 / JCM 3761 / NBRC 0622 / NRRL Y-65 / CBS 138) (Yeast).